A 556-amino-acid polypeptide reads, in one-letter code: Acetyl-coenzyme A thioesterase (556 aa).

The HotDog ACOT-type 1 domain occupies 6–118; that stretch reads APGEVLMSQA…FSTFVAKPVG (113 aa). At lysine 34 the chain carries N6-succinyllysine. CoA-binding positions include 54 to 56 and 83 to 85; these read TAS and STS. Residue lysine 97 is modified to N6-succinyllysine. Arginine 145 contacts CoA. 2 positions are modified to N6-succinyllysine: lysine 160 and lysine 229. The region spanning 180 to 295 is the HotDog ACOT-type 2 domain; the sequence is MGTSVQSIEL…FLIYNAVDDQ (116 aa). 235–237 serves as a coordination point for CoA; it reads KFR. The START domain maps to 327-536; the sequence is GRKYVISHKK…GGWSKSIEEA (210 aa).

In terms of assembly, homodimer or homotetramer.

It localises to the cytoplasm. It is found in the cytosol. The enzyme catalyses acetyl-CoA + H2O = acetate + CoA + H(+). The catalysed reaction is butanoyl-CoA + H2O = butanoate + CoA + H(+). It carries out the reaction hexanoyl-CoA + H2O = hexanoate + CoA + H(+). Its pathway is lipid metabolism; fatty acid metabolism. With respect to regulation, allosterically regulated by ATP (activator) and ADP (inhibitor). Cold labile, it dissociates into inactive monomers at low temperature. Functionally, catalyzes the hydrolysis of acyl-CoAs into free fatty acids and coenzyme A (CoASH), regulating their respective intracellular levels. Preferentially hydrolyzes acetyl-CoA. This chain is Acetyl-coenzyme A thioesterase (Acot12), found in Mus musculus (Mouse).